Here is a 130-residue protein sequence, read N- to C-terminus: MKVLNNLLYTGDHEWVRVEDNKAYIGISDCAQRMLSDIVFVELPEVDDEIAKGETFATIESVKAASDSYMPVSGTIVEINEELEDNPAALNEDPYGSWIAAIEMSDKSELEELIKPEVYEKICEELDKEA.

Positions 22-103 constitute a Lipoyl-binding domain; that stretch reads KAYIGISDCA…PYGSWIAAIE (82 aa). K63 carries the N6-lipoyllysine modification.

It belongs to the GcvH family. In terms of assembly, the glycine cleavage system is composed of four proteins: P, T, L and H. (R)-lipoate is required as a cofactor.

Functionally, the glycine cleavage system catalyzes the degradation of glycine. The H protein shuttles the methylamine group of glycine from the P protein to the T protein. The protein is Glycine cleavage system H protein of Clostridium botulinum (strain ATCC 19397 / Type A).